A 251-amino-acid polypeptide reads, in one-letter code: DNA polymerase sliding clamp 2 (251 aa).

It belongs to the PCNA family. As to quaternary structure, heterotrimer. The subunits circularize to form a toroid; DNA passes through its center. Replication factor C (RFC) is required to load the toroid on the DNA.

In terms of biological role, sliding clamp subunit that acts as a moving platform for DNA processing. Responsible for tethering the catalytic subunit of DNA polymerase and other proteins to DNA during high-speed replication. This Aeropyrum pernix (strain ATCC 700893 / DSM 11879 / JCM 9820 / NBRC 100138 / K1) protein is DNA polymerase sliding clamp 2.